The following is a 260-amino-acid chain: Serine protease VLSP-1 (260 aa).

The first 18 residues, 1–18 (MVLIRVLANLLVLHLSYA), serve as a signal peptide directing secretion. A propeptide spanning residues 19 to 24 (QKSSEL) is cleaved from the precursor. Positions 25-251 (VIGGDECNIN…YSDWIQSIIA (227 aa)) constitute a Peptidase S1 domain. Cystine bridges form between C31–C165, C52–C68, C100–C258, C144–C212, C176–C191, and C202–C227. N-linked (GlcNAc...) asparagine glycosylation is present at N44. H67 functions as the Charge relay system in the catalytic mechanism. Residue N103 is glycosylated (N-linked (GlcNAc...) asparagine). The active-site Charge relay system is D112. An N-linked (GlcNAc...) asparagine glycan is attached at N156. S206 (charge relay system) is an active-site residue.

This sequence belongs to the peptidase S1 family. Snake venom subfamily. Expressed by the venom gland.

It localises to the secreted. Functionally, snake venom serine protease that may act in the hemostasis system of the prey. The chain is Serine protease VLSP-1 from Macrovipera lebetinus (Levantine viper).